Here is a 76-residue protein sequence, read N- to C-terminus: MIYKVFYQETKERSPRREKTRALYLEIEAANELEGRIQARKLIEENTPYNIEFIELLSDKHLEYEKESGTFELTEF.

The protein belongs to the RNA polymerase subunit epsilon family. In terms of assembly, RNAP is composed of a core of 2 alpha, a beta and a beta' subunit. The core is associated with a delta subunit, and at least one of epsilon or omega. When a sigma factor is associated with the core the holoenzyme is formed, which can initiate transcription.

The enzyme catalyses RNA(n) + a ribonucleoside 5'-triphosphate = RNA(n+1) + diphosphate. A non-essential component of RNA polymerase (RNAP). The protein is DNA-directed RNA polymerase subunit epsilon of Streptococcus sanguinis (strain SK36).